A 311-amino-acid polypeptide reads, in one-letter code: Probable manganese-dependent inorganic pyrophosphatase (311 aa).

Mn(2+)-binding residues include H9, D13, D15, D77, H99, and D151.

This sequence belongs to the PPase class C family. Mn(2+) is required as a cofactor.

The protein localises to the cytoplasm. It carries out the reaction diphosphate + H2O = 2 phosphate + H(+). This Streptococcus equi subsp. equi (strain 4047) protein is Probable manganese-dependent inorganic pyrophosphatase.